Here is a 720-residue protein sequence, read N- to C-terminus: Ornithine decarboxylase (720 aa).

Position 354 is an N6-(pyridoxal phosphate)lysine (K354).

This sequence belongs to the Orn/Lys/Arg decarboxylase class-I family. Pyridoxal 5'-phosphate serves as cofactor.

The catalysed reaction is L-ornithine + H(+) = putrescine + CO2. The protein is Ornithine decarboxylase (speF) of Haemophilus influenzae (strain ATCC 51907 / DSM 11121 / KW20 / Rd).